The primary structure comprises 470 residues: Crh-like protein UTR2 (470 aa).

The N-terminal stretch at 1–23 (MRFSTLHFAFLATLSSIFTVVAA) is a signal peptide. C58 and C69 are joined by a disulfide. Residues N65, N100, and N125 are each glycosylated (N-linked (GlcNAc...) asparagine). Residues 95 to 282 (SDYLGNSTEA…WAGGLINWDS (188 aa)) form the GH16 domain. Catalysis depends on E168, which acts as the Nucleophile. E172 acts as the Proton donor in catalysis. Position 172 (E172) interacts with chitin. N-linked (GlcNAc...) asparagine glycans are attached at residues N177, N194, N198, N202, N235, and N239. Residues W259 and T270 each coordinate chitin. Residues N314 and N327 are each glycosylated (N-linked (GlcNAc...) asparagine). Residues 347-446 (SDDATGFDPQ…SSGSSSQGVA (100 aa)) are disordered. Low complexity-rich tracts occupy residues 370–384 (TTIT…ITSV) and 392–408 (TANV…QATA). The span at 409-418 (KSSTGTNTYD) shows a compositional bias: polar residues. The segment covering 433-446 (TDSGSSGSSSQGVA) has biased composition (low complexity). S440 carries GPI-anchor amidated serine lipidation. The propeptide at 441-470 (SSQGVANSLNESVISGIFASICLGILSFFM) is removed in mature form. N450 carries N-linked (GlcNAc...) asparagine glycosylation.

Belongs to the glycosyl hydrolase 16 family. CRH1 subfamily. In terms of processing, the GPI-anchor is attached to the protein in the endoplasmic reticulum and serves to target the protein to the cell surface. There, the glucosamine-inositol phospholipid moiety is cleaved off and the GPI-modified mannoprotein is covalently attached via its lipidless GPI glycan remnant to the 1,6-beta-glucan of the outer cell wall layer.

The protein localises to the secreted. Its subcellular location is the cell wall. It is found in the membrane. It catalyses the reaction Random endo-hydrolysis of N-acetyl-beta-D-glucosaminide (1-&gt;4)-beta-linkages in chitin and chitodextrins.. Functionally, dual chitinase/transglycosylase that plays a role in cell wall architecture. Chitinase and transglycosylase activities are coupled. Required for the polysaccharide cross-linking at the septa and the cell wall. More specifically, transfers chitin to 1,6-beta-glucan in the cell wall. Plays an important role in fungal pathogenesis via its functions in cell wall assembly and regeneration, filamentation, and adherence to host cells. Acts as a cell surface antigen in acute candidemia patients. The polypeptide is Crh-like protein UTR2 (Candida albicans (strain SC5314 / ATCC MYA-2876) (Yeast)).